The chain runs to 193 residues: Putative manganese efflux pump MntP (193 aa).

The next 6 helical transmembrane spans lie at 3–23 (IFAV…VAVV), 41–61 (AAFG…GVSV), 69–89 (DHWI…LSGL), 107–127 (AGRN…AVGL), 130–150 (AILG…CAVI), and 164–184 (LCAL…AIAC).

It belongs to the MntP (TC 9.B.29) family.

Its subcellular location is the cell inner membrane. In terms of biological role, probably functions as a manganese efflux pump. The chain is Putative manganese efflux pump MntP from Desulfovibrio desulfuricans (strain ATCC 27774 / DSM 6949 / MB).